A 316-amino-acid polypeptide reads, in one-letter code: BTB/POZ domain-containing adapter for CUL3-mediated RhoA degradation protein 2 (316 aa).

The BTB domain occupies 28–96 (KYVQLNVGGS…LRDDTITLPQ (69 aa)). The segment covering 268–279 (EATSRSRSQASP) has biased composition (polar residues). A disordered region spans residues 268 to 288 (EATSRSRSQASPSEDEDTFEL). A Phosphoserine modification is found at Ser278. At Ser280 the chain carries Phosphoserine; by CK2.

Belongs to the BACURD family. As to quaternary structure, component of the BCR(TNFAIP1) E3 ubiquitin ligase complex, at least composed of CUL3, TNFAIP1/BACURD2 and RBX1. Interacts with RHOA; with a preference for RhoA-GDP. Interacts with RHOB. Interacts with PCNA. Interacts with CSNK2B. In terms of processing, phosphorylation at Ser-280 by CK2 facilitates the nucleus localization and increases interaction with PCNA.

It is found in the cytoplasm. It localises to the nucleus. Its subcellular location is the endosome. Its pathway is protein modification; protein ubiquitination. Substrate-specific adapter of a BCR (BTB-CUL3-RBX1) E3 ubiquitin-protein ligase complex involved in regulation of cytoskeleton structure. The BCR(TNFAIP1) E3 ubiquitin ligase complex mediates the ubiquitination of RHOA, leading to its degradation by the proteasome, thereby regulating the actin cytoskeleton and cell migration. Its interaction with RHOB may regulate apoptosis. May enhance the PCNA-dependent DNA polymerase delta activity. The protein is BTB/POZ domain-containing adapter for CUL3-mediated RhoA degradation protein 2 (Tnfaip1) of Mus musculus (Mouse).